Here is a 78-residue protein sequence, read N- to C-terminus: Omega-conotoxin-like ArMKLT1-011 (78 aa).

An N-terminal signal peptide occupies residues 1–22 (MKLTCMMIVAVLFLTAWTSVTA). The propeptide occupies 23–48 (VNTRGELENLFLRASHEMNSEASKLD). Intrachain disulfides connect C52–C69, C59–C73, and C68–C77.

Belongs to the conotoxin O1 superfamily. As to expression, expressed by the venom duct.

Its subcellular location is the secreted. Its function is as follows. Omega-conotoxins act at presynaptic membranes, they bind and block voltage-gated calcium channels (Cav). This chain is Omega-conotoxin-like ArMKLT1-011, found in Conus arenatus (Sand-dusted cone).